The following is a 126-amino-acid chain: Urease subunit beta (126 aa).

The protein belongs to the urease beta subunit family. Heterotrimer of UreA (gamma), UreB (beta) and UreC (alpha) subunits. Three heterotrimers associate to form the active enzyme.

The protein localises to the cytoplasm. The enzyme catalyses urea + 2 H2O + H(+) = hydrogencarbonate + 2 NH4(+). It functions in the pathway nitrogen metabolism; urea degradation; CO(2) and NH(3) from urea (urease route): step 1/1. The polypeptide is Urease subunit beta (Haloquadratum walsbyi (strain DSM 16790 / HBSQ001)).